The primary structure comprises 394 residues: Elongation factor Tu (394 aa).

Residues 10–205 (KPHMNVGTIG…SMDNYFDLPE (196 aa)) enclose the tr-type G domain. The segment at 19 to 26 (GHVDHGKT) is G1. 19-26 (GHVDHGKT) is a binding site for GTP. Threonine 26 contacts Mg(2+). Residues 61–65 (GITIN) are G2. The segment at 82-85 (DCPG) is G3. Residues 82-86 (DCPGH) and 137-140 (NKLD) each bind GTP. The interval 137 to 140 (NKLD) is G4. The interval 173–175 (SAF) is G5.

This sequence belongs to the TRAFAC class translation factor GTPase superfamily. Classic translation factor GTPase family. EF-Tu/EF-1A subfamily. As to quaternary structure, monomer.

It is found in the cytoplasm. The enzyme catalyses GTP + H2O = GDP + phosphate + H(+). GTP hydrolase that promotes the GTP-dependent binding of aminoacyl-tRNA to the A-site of ribosomes during protein biosynthesis. In Borreliella afzelii (strain PKo) (Borrelia afzelii), this protein is Elongation factor Tu.